Reading from the N-terminus, the 70-residue chain is uncharacterized protein (70 aa).

This is an uncharacterized protein from Enterobacteria phage T4 (Bacteriophage T4).